The sequence spans 620 residues: MDSHTLIQALIYLGSAALIVPIAVRLGLGSVLGYLIAGCIIGPWGLRLVTDAESILHFAEIGVVLMLFIIGLELDPQRLWKLRAAVFGGGALQMVICGGLLGLFCMLLGLRWQVAELIGMTLALSSTAIAMQAMNERNLMVTQMGRSAFAVLLFQDIAAIPLVAMIPLLAASSASTTMGAFVLSALKVAGALVLVVLLGRYVTRPALRFVARSGLREVFSAVALFLVFGFGLLLEEVGLSMAMGAFLAGVLLASSEYRHALESDIEPFKGLLLGLFFIGVGMSIDFGTLLENPLRIVILLLGFLIIKIAMLWLIARPLQVPNKQRRWFAVLLGQGSEFAFVVFGAAQMANVLEPEWAKSLTLAVALSMAATPILLVILNRLEQSSTEEAREADEIDEEQPRVIIAGFGRFGQITGRLLLSSGVKMVVLDHDPDHIETLRKFGMKVFYGDATRMDLLESAGAAKAEVLINAIDDPQTNLQLTEMVKEHFPHLQIIARARDVDHYIRLRQAGVEKPERETFEGALKTGRLALESLGLGPYEARERADVFRRFNIQMVEEMAMVENDTKARAAVYKRTSAMLSEIITEDREHLSLIQRHGWQGTEEGKHTGNMADEPETKPSS.

The next 12 helical transmembrane spans lie at 4–24, 26–46, 54–74, 90–110, 114–134, 149–169, 178–198, 218–238, 270–290, 294–314, 327–347, and 359–379; these read HTLI…PIAV, LGLG…PWGL, SILH…GLEL, GALQ…LLGL, VAEL…MQAM, FAVL…IPLL, MGAF…VVLL, VFSA…EEVG, GLLL…GTLL, LRIV…LWLI, WFAV…GAAQ, and SLTL…VILN. The RCK N-terminal domain maps to 399-518; sequence QPRVIIAGFG…AGVEKPERET (120 aa). The tract at residues 597–620 is disordered; it reads GWQGTEEGKHTGNMADEPETKPSS.

This sequence belongs to the monovalent cation:proton antiporter 2 (CPA2) transporter (TC 2.A.37) family. KefC subfamily. In terms of assembly, homodimer. Interacts with the regulatory subunit KefF.

Its subcellular location is the cell inner membrane. In terms of biological role, pore-forming subunit of a potassium efflux system that confers protection against electrophiles. Catalyzes K(+)/H(+) antiport. The sequence is that of Glutathione-regulated potassium-efflux system protein KefC from Escherichia coli O127:H6 (strain E2348/69 / EPEC).